Consider the following 94-residue polypeptide: Pyrimidine/purine nucleoside phosphorylase (94 aa).

This sequence belongs to the nucleoside phosphorylase PpnP family.

The enzyme catalyses a purine D-ribonucleoside + phosphate = a purine nucleobase + alpha-D-ribose 1-phosphate. It catalyses the reaction adenosine + phosphate = alpha-D-ribose 1-phosphate + adenine. It carries out the reaction cytidine + phosphate = cytosine + alpha-D-ribose 1-phosphate. The catalysed reaction is guanosine + phosphate = alpha-D-ribose 1-phosphate + guanine. The enzyme catalyses inosine + phosphate = alpha-D-ribose 1-phosphate + hypoxanthine. It catalyses the reaction thymidine + phosphate = 2-deoxy-alpha-D-ribose 1-phosphate + thymine. It carries out the reaction uridine + phosphate = alpha-D-ribose 1-phosphate + uracil. The catalysed reaction is xanthosine + phosphate = alpha-D-ribose 1-phosphate + xanthine. In terms of biological role, catalyzes the phosphorolysis of diverse nucleosides, yielding D-ribose 1-phosphate and the respective free bases. Can use uridine, adenosine, guanosine, cytidine, thymidine, inosine and xanthosine as substrates. Also catalyzes the reverse reactions. The chain is Pyrimidine/purine nucleoside phosphorylase from Klebsiella pneumoniae (strain 342).